Here is a 232-residue protein sequence, read N- to C-terminus: Translation initiation factor IF-3 (232 aa).

Disordered stretches follow at residues 1–21 (MAIQ…RTNR) and 184–232 (LQSQ…AAQR). A compositionally biased stretch (low complexity) spans 193–208 (AAAAAAPAAAPAAGAP). The span at 209-222 (APTPAPAPAAPAPA) shows a compositional bias: pro residues. The segment covering 223–232 (PAAADPAAQR) has biased composition (low complexity).

It belongs to the IF-3 family. In terms of assembly, monomer.

The protein resides in the cytoplasm. In terms of biological role, IF-3 binds to the 30S ribosomal subunit and shifts the equilibrium between 70S ribosomes and their 50S and 30S subunits in favor of the free subunits, thus enhancing the availability of 30S subunits on which protein synthesis initiation begins. This Anaeromyxobacter sp. (strain K) protein is Translation initiation factor IF-3.